The chain runs to 94 residues: Co-chaperonin GroES (94 aa).

This sequence belongs to the GroES chaperonin family. In terms of assembly, heptamer of 7 subunits arranged in a ring. Interacts with the chaperonin GroEL.

It is found in the cytoplasm. Functionally, together with the chaperonin GroEL, plays an essential role in assisting protein folding. The GroEL-GroES system forms a nano-cage that allows encapsulation of the non-native substrate proteins and provides a physical environment optimized to promote and accelerate protein folding. GroES binds to the apical surface of the GroEL ring, thereby capping the opening of the GroEL channel. This Ehrlichia chaffeensis protein is Co-chaperonin GroES.